Reading from the N-terminus, the 560-residue chain is MHDNMSTMVYMKEEKLEKLTQDEIISKTKQVIQGLEALKNEHNSILQSLLETLKCLKKDDESNLVEEKSSMIRKSLEMLELGLSEAQVMMALSNHLNAVESEKQKLRAQVRRLCQENQWLRDELANTQQKLQKSEQSVAQLEEEKKHLEFMNQLKKYDDDISPSEDKDSDSSKEPLDDLFPNDEDDPGQGIQQQHSSAAAAAQQGGYEIPARLRTLHNLVIQYASQGRYEVAVPLCKQALEDLEKTSGHDHPDVATMLNILALVYRDQNKYKDAANLLNDALAIREKTLGRDHPAVAATLNNLAVLYGKRGKYKEAEPLCKRALEIREKVLGKDHPDVAKQLNNLALLCQNQGKYEEVEYYYQRALEIYQTKLGPDDPNVAKTKNNLASCYLKQGKFKQAETLYKEILTRAHEREFGSVDDENKPIWMHAEEREECKGKQKDGSSFGEYGGWYKACKVDSPTVTTTLKNLGALYRRQGKFEAAETLEEAALRSRKQGLDNVHKQRVAEVLNDPENVEKRRSRESLNVDVVKYESGPDGGEEVSMSVEWNGMRKMKLGLVK.

A coiled-coil region spans residues 27–156 (KTKQVIQGLE…HLEFMNQLKK (130 aa)). The span at 156 to 176 (KYDDDISPSEDKDSDSSKEPL) shows a compositional bias: basic and acidic residues. The tract at residues 156 to 203 (KYDDDISPSEDKDSDSSKEPLDDLFPNDEDDPGQGIQQQHSSAAAAAQ) is disordered. S162 is modified (phosphoserine). Positions 188 to 203 (GQGIQQQHSSAAAAAQ) are enriched in low complexity. 5 TPR repeats span residues 213-246 (LRTLHNLVIQYASQGRYEVAVPLCKQALEDLEKT), 255-288 (ATMLNILALVYRDQNKYKDAANLLNDALAIREKT), 297-330 (AATLNNLAVLYGKRGKYKEAEPLCKRALEIREKV), 339-372 (AKQLNNLALLCQNQGKYEEVEYYYQRALEIYQTK), and 381-414 (AKTKNNLASCYLKQGKFKQAETLYKEILTRAHER). Y449 bears the Phosphotyrosine mark. Position 460 is a phosphoserine (S460). One copy of the TPR 6 repeat lies at 464–497 (TTTLKNLGALYRRQGKFEAAETLEEAALRSRKQG). 2 positions are modified to phosphoserine: S521 and S524.

It belongs to the kinesin light chain family. In terms of assembly, oligomeric complex composed of two heavy chains and two light chains. Interacts with SPAG9. Interacts with ATCAY; may link mitochondria to KLC1 and regulate mitochondria localization into neuron projections. Interacts (via TPR repeats) with TOR1A; the interaction associates TOR1A with the kinesin oligomeric complex. Interacts with BORCS5. Interacts with MAPK8IP3/JIP3 and NTRK2/TRKB; interaction with NTRK2/TRKB is mediated by MAPK8IP3/JIP3. Interacts with CLSTN1; phosphorylation at Ser-460 inhibits interaction with CLSTN1. In terms of processing, phosphorylation at Ser-460 by ERK inhibits interaction with CLSTN1 and localization to cytoplasmic vesicles. In terms of tissue distribution, expressed in brain (at protein level).

The protein resides in the cell projection. The protein localises to the growth cone. Its subcellular location is the cytoplasmic vesicle. It localises to the cytoplasm. It is found in the cytoskeleton. Its function is as follows. Kinesin is a microtubule-associated force-producing protein that may play a role in organelle transport. The light chain may function in coupling of cargo to the heavy chain or in the modulation of its ATPase activity. In Rattus norvegicus (Rat), this protein is Kinesin light chain 1 (Klc1).